Consider the following 317-residue polypeptide: Protoheme IX farnesyltransferase (317 aa).

The next 9 membrane-spanning stretches (helical) occupy residues 28–48 (IIPL…HGHI), 53–73 (LLIT…LNCI), 101–121 (LIFA…FVNL), 122–142 (LSAC…THWL), 150–170 (IVIG…AVTG), 178–198 (ILFA…ALMI), 223–243 (IWIY…PFQA), 246–266 (LFYA…AWEL), and 282–302 (YSIL…LPAV).

This sequence belongs to the UbiA prenyltransferase family. Protoheme IX farnesyltransferase subfamily.

The protein localises to the cell inner membrane. The enzyme catalyses heme b + (2E,6E)-farnesyl diphosphate + H2O = Fe(II)-heme o + diphosphate. Its pathway is porphyrin-containing compound metabolism; heme O biosynthesis; heme O from protoheme: step 1/1. In terms of biological role, converts heme B (protoheme IX) to heme O by substitution of the vinyl group on carbon 2 of heme B porphyrin ring with a hydroxyethyl farnesyl side group. The protein is Protoheme IX farnesyltransferase of Picosynechococcus sp. (strain ATCC 27264 / PCC 7002 / PR-6) (Agmenellum quadruplicatum).